The chain runs to 287 residues: ATP synthase gamma chain (287 aa).

The protein belongs to the ATPase gamma chain family. In terms of assembly, F-type ATPases have 2 components, CF(1) - the catalytic core - and CF(0) - the membrane proton channel. CF(1) has five subunits: alpha(3), beta(3), gamma(1), delta(1), epsilon(1). CF(0) has three main subunits: a, b and c.

The protein resides in the cell membrane. In terms of biological role, produces ATP from ADP in the presence of a proton gradient across the membrane. The gamma chain is believed to be important in regulating ATPase activity and the flow of protons through the CF(0) complex. The protein is ATP synthase gamma chain of Bacillus velezensis (strain DSM 23117 / BGSC 10A6 / LMG 26770 / FZB42) (Bacillus amyloliquefaciens subsp. plantarum).